The chain runs to 201 residues: uncharacterized protein (201 aa).

The segment at 121–141 (HHRTRPGRGPGPRPGGSAMAG) is disordered.

This is an uncharacterized protein from Mycobacterium tuberculosis (strain ATCC 25618 / H37Rv).